Consider the following 526-residue polypeptide: GMP synthase [glutamine-hydrolyzing] (526 aa).

The Glutamine amidotransferase type-1 domain occupies 4–202 (KILILDFGSQ…VHDICGCDQS (199 aa)). Residue cysteine 81 is the Nucleophile of the active site. Catalysis depends on residues histidine 176 and glutamate 178. In terms of domain architecture, GMPS ATP-PPase spans 203-395 (WNMPDYVETA…LGLPHDMVYR (193 aa)). Residue 230 to 236 (SGGVDSS) participates in ATP binding.

As to quaternary structure, homodimer.

It carries out the reaction XMP + L-glutamine + ATP + H2O = GMP + L-glutamate + AMP + diphosphate + 2 H(+). It participates in purine metabolism; GMP biosynthesis; GMP from XMP (L-Gln route): step 1/1. Catalyzes the synthesis of GMP from XMP. This is GMP synthase [glutamine-hydrolyzing] from Methylobacillus flagellatus (strain ATCC 51484 / DSM 6875 / VKM B-1610 / KT).